Reading from the N-terminus, the 129-residue chain is MARRTNTRKRRVRKNIDTGIAHIRSTFNNTIVTITDVHGNAIAWSSAGALGFKGSRKSTPFAAQMAAEAAAKASMEHGMKTVEVNVKGPGAGREAAIRALQAAGLEITAIKDVTPIPHNGCRPPKRRRV.

The protein belongs to the universal ribosomal protein uS11 family. As to quaternary structure, part of the 30S ribosomal subunit. Interacts with proteins S7 and S18. Binds to IF-3.

In terms of biological role, located on the platform of the 30S subunit, it bridges several disparate RNA helices of the 16S rRNA. Forms part of the Shine-Dalgarno cleft in the 70S ribosome. This is Small ribosomal subunit protein uS11 from Geobacillus thermodenitrificans (strain NG80-2).